Here is a 178-residue protein sequence, read N- to C-terminus: Large ribosomal subunit protein uL6 (178 aa).

The protein belongs to the universal ribosomal protein uL6 family. As to quaternary structure, part of the 50S ribosomal subunit.

This protein binds to the 23S rRNA, and is important in its secondary structure. It is located near the subunit interface in the base of the L7/L12 stalk, and near the tRNA binding site of the peptidyltransferase center. The chain is Large ribosomal subunit protein uL6 from Corynebacterium urealyticum (strain ATCC 43042 / DSM 7109).